Reading from the N-terminus, the 117-residue chain is Nascent polypeptide-associated complex protein (117 aa).

The NAC-A/B domain occupies 9-77 (PKQLKQMQRA…ARERSLEAEM (69 aa)).

The protein belongs to the NAC-alpha family. As to quaternary structure, homodimer. Interacts with the ribosome. Binds ribosomal RNA.

Contacts the emerging nascent chain on the ribosome. The protein is Nascent polypeptide-associated complex protein of Methanothermobacter thermautotrophicus (strain ATCC 29096 / DSM 1053 / JCM 10044 / NBRC 100330 / Delta H) (Methanobacterium thermoautotrophicum).